The chain runs to 149 residues: MQVILLDKVANLGSLGDQVNVKAGYARNFLVPQGKAVPATKKNVEFFEARRAELEAKLADVLAAANARAEAINALGTVTIASKSGDEGKLFGSIGTRDIADAVTAAGVDVAKSEVRMPNGVLRTTGEHEVDFQVHSEVFAKLVVNVVAE.

This sequence belongs to the bacterial ribosomal protein bL9 family.

Binds to the 23S rRNA. The chain is Large ribosomal subunit protein bL9 from Enterobacter sp. (strain 638).